Reading from the N-terminus, the 131-residue chain is Profilin-11 (131 aa).

The cysteines at positions 13 and 115 are disulfide-linked. The Involved in PIP2 interaction signature appears at 81-97 (AVIRGKKGSGGITVKKT). At T111 the chain carries Phosphothreonine.

The protein belongs to the profilin family. Occurs in many kinds of cells as a complex with monomeric actin in a 1:1 ratio. In terms of processing, phosphorylated by MAP kinases.

It localises to the cytoplasm. It is found in the cytoskeleton. Binds to actin and affects the structure of the cytoskeleton. At high concentrations, profilin prevents the polymerization of actin, whereas it enhances it at low concentrations. The chain is Profilin-11 from Zea mays (Maize).